A 174-amino-acid chain; its full sequence is MQQSEQIVVGRIGAVYGVKGWLKVQSFTDDPESIFEYSPWLLSQKTEREMKVVEWRRHNNGLIARLEGISDRDEAARLTGADICITADELPALADDEFYWRDLIGMRVVNTNGYDMGVVEQIMPTASNDVLVVKANSNDGFGKSERLIPFIQSEYVTAVDKEAKQIQVEWPSDF.

The PRC barrel domain maps to 95–174 (DDEFYWRDLI…QIQVEWPSDF (80 aa)).

This sequence belongs to the RimM family. Binds ribosomal protein uS19.

It localises to the cytoplasm. Its function is as follows. An accessory protein needed during the final step in the assembly of 30S ribosomal subunit, possibly for assembly of the head region. Essential for efficient processing of 16S rRNA. May be needed both before and after RbfA during the maturation of 16S rRNA. It has affinity for free ribosomal 30S subunits but not for 70S ribosomes. This is Ribosome maturation factor RimM from Idiomarina loihiensis (strain ATCC BAA-735 / DSM 15497 / L2-TR).